We begin with the raw amino-acid sequence, 1093 residues long: Semaphorin 5c (1093 aa).

The signal sequence occupies residues 1–34 (MNMLILKLPKMFSQLWLLLILSLLTLEGPQPSTG). Residue Asn48 is glycosylated (N-linked (GlcNAc...) asparagine). Positions 50-495 (SRYISYQDLM…TDLALTRIPA (446 aa)) constitute a Sema domain. 2 disulfide bridges follow: Cys118-Cys128 and Cys146-Cys155. Asn162, Asn182, Asn285, and Asn295 each carry an N-linked (GlcNAc...) asparagine glycan. 2 disulfide bridges follow: Cys271–Cys376 and Cys296–Cys338. N-linked (GlcNAc...) asparagine glycosylation is present at Asn341. The region spanning 497 to 546 (HCSRHVSQSSCLNSMDPYCGWNELVERCMPQPQDSSVLQHWHQAPQITCP) is the PSI domain. TSP type-1 domains lie at 553-605 (DGGW…TNCT), 607-663 (HGGW…PPCP), and 671-726 (DGGW…QSCQ). Asn603 carries N-linked (GlcNAc...) asparagine glycosylation. Intrachain disulfides connect Cys619-Cys656, Cys623-Cys662, Cys634-Cys646, Cys683-Cys720, Cys687-Cys725, and Cys698-Cys710. Asn745 carries N-linked (GlcNAc...) asparagine glycosylation. TSP type-1 domains are found at residues 794–834 (DSAD…HACP), 850–901 (HGEW…VPCE), and 904–953 (LGWS…NECE). 3 disulfides stabilise this stretch: Cys862–Cys895, Cys866–Cys900, and Cys877–Cys885. Residues 960 to 980 (TATLPIVIFVGLLFTVACCLA) traverse the membrane as a helical segment. 2 N-linked (GlcNAc...) asparagine glycosylation sites follow: Asn998 and Asn1046. A disordered region spans residues 1018-1056 (PTKDYYDQRPKRQSSFRMPAKTSNLGNGNGTLNRNNMHQ). A compositionally biased stretch (low complexity) spans 1041–1053 (NLGNGNGTLNRNN).

This sequence belongs to the semaphorin family. As to expression, in egg chambers, high levels of expression in the follicle cells, with little to no expression in the germ cells (at protein level). In stage 3 to 7 egg chambers, planar polarized at the basal epithelial surface (at protein level).

It localises to the apical cell membrane. The protein localises to the lateral cell membrane. The protein resides in the endosome. Regulates the motility of migrating epithelial cells by providing guidance cues within the migratory environment and may also play a role in development of the olfactory system. May act as a positive axonal guidance cue. Function in neurons is essential for adult survival and is important for climbing behavior. Promotes collective migration of follicular epithelial cells in egg chambers, likely by acting at the leading edge of the basal epithelium cells to provide guidance cues across the cell boundary to the trailing edge of the cell ahead. The transmembrane receptor PlexA on the trailing edge of the cell ahead, appears to transduce this signal to suppress the formation of protrusions. Involved in olfactory avoidance behavior. The sequence is that of Semaphorin 5c from Drosophila melanogaster (Fruit fly).